A 661-amino-acid chain; its full sequence is Heme transporter BhuA (661 aa).

The N-terminal stretch at 1 to 23 (MKFTRTLVLASTSLLATVATSQA) is a signal peptide. The 112-residue stretch at 48-159 (KDNIEATGGT…AAGAIRYETV (112 aa)) folds into the TBDR plug domain. Residues 170-661 (TFGARIIGSY…TFTFQTAFKF (492 aa)) form the TBDR beta-barrel domain.

It belongs to the TonB-dependent receptor family.

It is found in the cell outer membrane. Its function is as follows. Heme transporter. The polypeptide is Heme transporter BhuA (bhuA) (Brucella abortus biovar 1 (strain 9-941)).